The sequence spans 123 residues: Ribosome-binding factor A (123 aa).

The protein belongs to the RbfA family. As to quaternary structure, monomer. Binds 30S ribosomal subunits, but not 50S ribosomal subunits or 70S ribosomes.

It is found in the cytoplasm. In terms of biological role, one of several proteins that assist in the late maturation steps of the functional core of the 30S ribosomal subunit. Associates with free 30S ribosomal subunits (but not with 30S subunits that are part of 70S ribosomes or polysomes). Required for efficient processing of 16S rRNA. May interact with the 5'-terminal helix region of 16S rRNA. The protein is Ribosome-binding factor A of Neisseria gonorrhoeae (strain ATCC 700825 / FA 1090).